The sequence spans 335 residues: Ketol-acid reductoisomerase (NADP(+)) (335 aa).

The region spanning 1-182 is the KARI N-terminal Rossmann domain; it reads MATIIYDNET…GATRAGVYET (182 aa). Residues 25–28, R48, S51, S53, and 83–86 each bind NADP(+); these read YGSQ and DEKQ. The active site involves H108. G134 provides a ligand contact to NADP(+). Residues 183–328 enclose the KARI C-terminal knotted domain; the sequence is TFREETETDL…KEIRANIPWL (146 aa). Positions 191, 195, 227, and 231 each coordinate Mg(2+). S252 is a substrate binding site.

This sequence belongs to the ketol-acid reductoisomerase family. Mg(2+) is required as a cofactor.

It catalyses the reaction (2R)-2,3-dihydroxy-3-methylbutanoate + NADP(+) = (2S)-2-acetolactate + NADPH + H(+). It carries out the reaction (2R,3R)-2,3-dihydroxy-3-methylpentanoate + NADP(+) = (S)-2-ethyl-2-hydroxy-3-oxobutanoate + NADPH + H(+). It participates in amino-acid biosynthesis; L-isoleucine biosynthesis; L-isoleucine from 2-oxobutanoate: step 2/4. It functions in the pathway amino-acid biosynthesis; L-valine biosynthesis; L-valine from pyruvate: step 2/4. In terms of biological role, involved in the biosynthesis of branched-chain amino acids (BCAA). Catalyzes an alkyl-migration followed by a ketol-acid reduction of (S)-2-acetolactate (S2AL) to yield (R)-2,3-dihydroxy-isovalerate. In the isomerase reaction, S2AL is rearranged via a Mg-dependent methyl migration to produce 3-hydroxy-3-methyl-2-ketobutyrate (HMKB). In the reductase reaction, this 2-ketoacid undergoes a metal-dependent reduction by NADPH to yield (R)-2,3-dihydroxy-isovalerate. In Methanosarcina acetivorans (strain ATCC 35395 / DSM 2834 / JCM 12185 / C2A), this protein is Ketol-acid reductoisomerase (NADP(+)).